We begin with the raw amino-acid sequence, 272 residues long: Orotidine 5'-phosphate decarboxylase (272 aa).

The active-site Proton donor is the K95.

Belongs to the OMP decarboxylase family. Type 2 subfamily.

The catalysed reaction is orotidine 5'-phosphate + H(+) = UMP + CO2. It participates in pyrimidine metabolism; UMP biosynthesis via de novo pathway; UMP from orotate: step 2/2. This chain is Orotidine 5'-phosphate decarboxylase, found in Cupriavidus metallidurans (strain ATCC 43123 / DSM 2839 / NBRC 102507 / CH34) (Ralstonia metallidurans).